The following is a 403-amino-acid chain: 4,4'-dithiodibutanoate disulfide reductase (403 aa).

Residue Q103 participates in FMN binding. Y173 functions as the Proton donor in the catalytic mechanism. 348-349 is a binding site for FMN; the sequence is AR.

This sequence belongs to the NADH:flavin oxidoreductase/NADH oxidase family. FMN serves as cofactor.

The enzyme catalyses 2 4-sulfanylbutanoate + NAD(+) = 4,4'-disulfanyldibutanoate + NADH + H(+). With respect to regulation, inactivated by cobalt, nickel and zinc ions. Its function is as follows. Involved in the degradation of the organic disulfide 4,4'-dithiodibutyric acid (DTDB). Catalyzes the initial cleavage of DTDB into 2 molecules of 4-mercaptobutyric acid (4MB). Low activities are observed with other disulfide compounds, such as 3,3'-dithiodipropionic acid DTDP, 3,3'-thiodipropionic acid TDP and DTNB. This is 4,4'-dithiodibutanoate disulfide reductase from Rhodococcus erythropolis (Arthrobacter picolinophilus).